Consider the following 1036-residue polypeptide: Mediator of RNA polymerase II transcription subunit 24 (1036 aa).

Belongs to the Mediator complex subunit 24 family. In terms of assembly, component of the Mediator complex.

It localises to the nucleus. In terms of biological role, component of the Mediator complex, a coactivator involved in the regulated transcription of nearly all RNA polymerase II-dependent genes. Mediator functions as a bridge to convey information from gene-specific regulatory proteins to the basal RNA polymerase II transcription machinery. Mediator is recruited to promoters by direct interactions with regulatory proteins and serves as a scaffold for the assembly of a functional preinitiation complex with RNA polymerase II and the general transcription factors. This Anopheles gambiae (African malaria mosquito) protein is Mediator of RNA polymerase II transcription subunit 24 (MED24).